Consider the following 191-residue polypeptide: UMP-CMP kinase 2 (191 aa).

Residue 12 to 17 (GSGKGT) participates in ATP binding. Residues 32–62 (SAGDLLRAERQREGSEFGALIESHIKNGSIV) are NMP. Residues R38, 60–62 (SIV), and 88–91 (GFPR) contribute to the a ribonucleoside 5'-phosphate site. A CMP-binding site is contributed by N95. The interval 128-136 (NRGQGRTDD) is LID. R129 is a binding site for ATP. The a ribonucleoside 5'-phosphate site is built by R133 and R144. R172 serves as a coordination point for ATP.

The protein belongs to the adenylate kinase family. UMP-CMP kinase subfamily. As to quaternary structure, monomer. Requires Mg(2+) as cofactor. As to expression, expressed in neurons and the pharynx.

It is found in the cytoplasm. Its subcellular location is the nucleus. It carries out the reaction CMP + ATP = CDP + ADP. The enzyme catalyses dCMP + ATP = dCDP + ADP. The catalysed reaction is UMP + ATP = UDP + ADP. Functionally, catalyzes the phosphorylation of pyrimidine nucleoside monophosphates at the expense of ATP. Plays an important role in de novo pyrimidine nucleotide biosynthesis. Has preference for UMP and CMP as phosphate acceptors. The polypeptide is UMP-CMP kinase 2 (Caenorhabditis elegans).